The sequence spans 264 residues: H-2 class II histocompatibility antigen, I-A beta chain (264 aa).

The signal sequence occupies residues 1–31 (MVWLPRVPCVAAVILLLTVLSPPVALVRDSR). The tract at residues 32–121 (PWFLEYCKSE…IFDNFLVPRR (90 aa)) is beta-1. Over 32–225 (PWFLEYCKSE…KAQSTSAQNK (194 aa)) the chain is Extracellular. Disulfide bonds link Cys-42-Cys-106 and Cys-144-Cys-200. Asn-46 carries an N-linked (GlcNAc...) asparagine glycan. The segment at 122 to 215 (VEPTVTVYPT…SLTDPVTVEW (94 aa)) is beta-2. The Ig-like C1-type domain occupies 124-214 (PTVTVYPTKT…PSLTDPVTVE (91 aa)). The interval 216–225 (KAQSTSAQNK) is connecting peptide. A helical membrane pass occupies residues 226–248 (MLSGVGGFVLGLLFLRAGLFIYF). Topologically, residues 249-264 (RNQKGQSGLQPTGLLS) are cytoplasmic.

This sequence belongs to the MHC class II family. Ubiquitinated in immature dendritic cells leading to down-regulation of MHC class II.

Its subcellular location is the membrane. This chain is H-2 class II histocompatibility antigen, I-A beta chain (H2-Eb1), found in Mus musculus (Mouse).